Reading from the N-terminus, the 455-residue chain is Maintenance of telomere capping protein 1 (455 aa).

Disordered stretches follow at residues 1–113 and 296–317; these read MAET…SATP and AKKM…EDAS. Positions 27-38 are enriched in basic and acidic residues; sequence PTSKEFNNDDSK. The segment covering 80 to 113 has biased composition (polar residues); sequence VAATSNERQQHDASNQPSQAAQTTINKNTESATP. Residues 296-305 show a composition bias toward basic and acidic residues; it reads AKKMNKENKQ.

This sequence belongs to the MTC1 family.

The protein localises to the cytoplasm. Involved in telomere capping. This is Maintenance of telomere capping protein 1 from Schizosaccharomyces pombe (strain 972 / ATCC 24843) (Fission yeast).